Consider the following 115-residue polypeptide: NADH-ubiquinone oxidoreductase chain 3 (115 aa).

A run of 3 helical transmembrane segments spans residues 3 to 23, 55 to 75, and 87 to 107; these read IMIT…IAFW, FFLV…LLPL, and MLTT…YEWL.

This sequence belongs to the complex I subunit 3 family. In terms of assembly, core subunit of respiratory chain NADH dehydrogenase (Complex I) which is composed of 45 different subunits. Interacts with TMEM186. Interacts with TMEM242.

Its subcellular location is the mitochondrion inner membrane. The catalysed reaction is a ubiquinone + NADH + 5 H(+)(in) = a ubiquinol + NAD(+) + 4 H(+)(out). Its function is as follows. Core subunit of the mitochondrial membrane respiratory chain NADH dehydrogenase (Complex I) which catalyzes electron transfer from NADH through the respiratory chain, using ubiquinone as an electron acceptor. Essential for the catalytic activity of complex I. The chain is NADH-ubiquinone oxidoreductase chain 3 from Dasypus novemcinctus (Nine-banded armadillo).